Here is a 795-residue protein sequence, read N- to C-terminus: MKFSEKWLREWVNPAIDTQALSEQLSMAGLEVDGVTPAAAKFNGVLVGEVVECGQHPDADKLRVTKINVGGDELLDIVCGAPNCRLGIKVAVATVGAVLPGDFKIKKAKLRGQPSNGMLCAFVELGISEEGDGIMELPSDAPVGTDLREYLGLDDNIIDVDLTPNRGDCLGIKGLAREVGVLNSIDVNVLQIPAVTATVDDKVSIELVNEDACPRYLGRVIKGINLDTATPLWMVEKLRRSGVRSIDPVVDVTNYVLLELGHPMHAFDLNAIEGGIKVRSANAGEELVLLDGNSVKLNESTLVIADHNKALAIAGIFGGEQSGVTNKTSDILLESAFFNPVAIAGQARSYGLHTDASHRYERGVDFALQHDAIERATALLLEIVGGEAGPVVEAVAADKLPKVTEVRLRRSRLDRVIGHHIEDEKVTDILTRLGFNVKVENDSWSADVPSYRFDVRIEEDLIEEVARVYGYNSIPNVAPTAKLKMTTHNEATIALSKFRNTLVARGYQEAITYSFVDPKAQAILHPESQPLVLPHPISIEMSAMRVSLMPGLLASLAYNQNRQQPRIRLFEHGLKFLSDENAENGVNQVPVIGGVITGLAHGEHWVEEKRNVDFYDVKGDVEALLAITNDMSRFEIKAEQSDGLHPGQSAVIYVAGKKVGFFGALHPQAQKSLDINNATFVFEIEMSAIEKRNLPQVAGVSKFPSNRRDIAILVQESVNIGDILTAIEKVGGNQLVDLNLFDVYKGKGIEPNYKSLAIALTLQSVDRTLEEKDINLVVDNVVATLAEQFNASLRD.

The region spanning 39–148 (AAKFNGVLVG…SDAPVGTDLR (110 aa)) is the tRNA-binding domain. The B5 domain occupies 401 to 476 (PKVTEVRLRR…RVYGYNSIPN (76 aa)). Mg(2+) is bound by residues Asp454, Asp460, Glu463, and Glu464. The region spanning 701-794 (SKFPSNRRDI…LAEQFNASLR (94 aa)) is the FDX-ACB domain.

This sequence belongs to the phenylalanyl-tRNA synthetase beta subunit family. Type 1 subfamily. Tetramer of two alpha and two beta subunits. Mg(2+) is required as a cofactor.

It is found in the cytoplasm. It carries out the reaction tRNA(Phe) + L-phenylalanine + ATP = L-phenylalanyl-tRNA(Phe) + AMP + diphosphate + H(+). This Pseudoalteromonas translucida (strain TAC 125) protein is Phenylalanine--tRNA ligase beta subunit.